Consider the following 66-residue polypeptide: ATP synthase F(0) complex subunit 8 (66 aa).

A helical transmembrane segment spans residues 8-24 (TWLTMILSMFLTLFIIF). An N6-acetyllysine; alternate modification is found at Lys54. N6-succinyllysine; alternate is present on Lys54. Lys57 is modified (N6-acetyllysine).

The protein belongs to the ATPase protein 8 family. In terms of assembly, component of the ATP synthase complex composed at least of ATP5F1A/subunit alpha, ATP5F1B/subunit beta, ATP5MC1/subunit c (homooctomer), MT-ATP6/subunit a, MT-ATP8/subunit 8, ATP5ME/subunit e, ATP5MF/subunit f, ATP5MG/subunit g, ATP5MK/subunit k, ATP5MJ/subunit j, ATP5F1C/subunit gamma, ATP5F1D/subunit delta, ATP5F1E/subunit epsilon, ATP5PF/subunit F6, ATP5PB/subunit b, ATP5PD/subunit d, ATP5PO/subunit OSCP. ATP synthase complex consists of a soluble F(1) head domain (subunits alpha(3) and beta(3)) - the catalytic core - and a membrane F(0) domain - the membrane proton channel (subunits c, a, 8, e, f, g, k and j). These two domains are linked by a central stalk (subunits gamma, delta, and epsilon) rotating inside the F1 region and a stationary peripheral stalk (subunits F6, b, d, and OSCP). Interacts with PRICKLE3.

The protein localises to the mitochondrion membrane. Functionally, subunit 8, of the mitochondrial membrane ATP synthase complex (F(1)F(0) ATP synthase or Complex V) that produces ATP from ADP in the presence of a proton gradient across the membrane which is generated by electron transport complexes of the respiratory chain. ATP synthase complex consist of a soluble F(1) head domain - the catalytic core - and a membrane F(1) domain - the membrane proton channel. These two domains are linked by a central stalk rotating inside the F(1) region and a stationary peripheral stalk. During catalysis, ATP synthesis in the catalytic domain of F(1) is coupled via a rotary mechanism of the central stalk subunits to proton translocation. In vivo, can only synthesize ATP although its ATP hydrolase activity can be activated artificially in vitro. Part of the complex F(0) domain. The polypeptide is ATP synthase F(0) complex subunit 8 (Bos mutus grunniens (Wild yak)).